Here is an 855-residue protein sequence, read N- to C-terminus: Dynein axonemal assembly factor 5 (855 aa).

Ala2 carries the post-translational modification N-acetylalanine. HEAT repeat units follow at residues 71-109, 202-240, 241-278, 280-318, 354-376, 377-414, 599-638, 696-734, 738-776, and 784-822; these read GPWARLLLPRLLRCLSDPAEGCRALAVHLLDLGLRRAAR, HMQSESLIGPLMQTISHQHWKVRVAAIEATGAVIHFGNG, KSVDDVLSHFAQRLFDDVPQVRRAVASVVGGWLLCLRD, YSFFHKLIPLLLSSLNDEVPEVRQLAASLWEDVGLQWQK, FRNLSKILPALCHDITDWVVGTR, VKSAQLLPVLLLHAEDHATQHLEVVLRTLFQACTDEEA, GEALPHVVPTLRACLQPSQDPQMRLKLFSILSTVLLRATD, RDVQETLMPQVLTTLEEDSKMTRLISCRIINTFLKTSGG, PEKLIRIYPELLKRLDDVSNDVRMAAASTLVTWLQCVKG, and QSSVQYLYRELLVHLDDPERAIQDAILEVLKEGSGLFPD.

The protein belongs to the DNAAF5 family. Interacts with DNAI2; probably involved in outer arm dynein assembly. As to expression, expressed in nasal epithelium and lung epithelium by ciliated cells (at protein level).

It localises to the cytoplasm. Its subcellular location is the dynein axonemal particle. Its function is as follows. Cytoplasmic protein involved in the delivery of the dynein machinery to the motile cilium. It is required for the assembly of the axonemal dynein inner and outer arms, two structures attached to the peripheral outer doublet A microtubule of the axoneme, that play a crucial role in cilium motility. In Homo sapiens (Human), this protein is Dynein axonemal assembly factor 5.